The chain runs to 541 residues: Tegument protein UL21 homolog (541 aa).

It belongs to the alphaherpesvirinae UL21 protein family. In terms of assembly, interacts (via C-terminus) with UL16.

The protein localises to the virion tegument. It is found in the host cytoplasm. Its subcellular location is the host nucleus. May participate in DNA packaging/capsid maturation events. Promotes efficient incorporation of tegument proteins UL46, UL49, and US3 homologs into virions. May also play a role in capsid transport to the trans-Golgi network (TGN). This Homo sapiens (Human) protein is Tegument protein UL21 homolog.